Consider the following 473-residue polypeptide: Arginine biosynthesis bifunctional protein ArgJ, mitochondrial (473 aa).

Threonine 201, lysine 230, threonine 241, glutamate 328, asparagine 468, and threonine 473 together coordinate substrate. Threonine 241 serves as the catalytic Nucleophile.

Belongs to the ArgJ family. Heterodimer of an alpha and a beta chain. In terms of processing, the alpha and beta chains are autoproteolytically processed from a single precursor protein within the mitochondrion.

It is found in the mitochondrion matrix. The enzyme catalyses N(2)-acetyl-L-ornithine + L-glutamate = N-acetyl-L-glutamate + L-ornithine. The catalysed reaction is L-glutamate + acetyl-CoA = N-acetyl-L-glutamate + CoA + H(+). The protein operates within amino-acid biosynthesis; L-arginine biosynthesis; L-ornithine and N-acetyl-L-glutamate from L-glutamate and N(2)-acetyl-L-ornithine (cyclic): step 1/1. It functions in the pathway amino-acid biosynthesis; L-arginine biosynthesis; N(2)-acetyl-L-ornithine from L-glutamate: step 1/4. Catalyzes two activities which are involved in the cyclic version of arginine biosynthesis: the synthesis of acetylglutamate from glutamate and acetyl-CoA, and of ornithine by transacetylation between acetylornithine and glutamate. The chain is Arginine biosynthesis bifunctional protein ArgJ, mitochondrial from Blastomyces gilchristii (strain SLH14081) (Blastomyces dermatitidis).